An 86-amino-acid chain; its full sequence is Large ribosomal subunit protein uL23 (86 aa).

Belongs to the universal ribosomal protein uL23 family. In terms of assembly, part of the 50S ribosomal subunit. Contacts protein L29.

Binds to 23S rRNA. One of the proteins that surrounds the polypeptide exit tunnel on the outside of the ribosome. This is Large ribosomal subunit protein uL23 from Caldivirga maquilingensis (strain ATCC 700844 / DSM 13496 / JCM 10307 / IC-167).